Consider the following 314-residue polypeptide: Hydroxyacyl-coenzyme A dehydrogenase, mitochondrial (314 aa).

A mitochondrion-targeting transit peptide spans 1–12 (MAFVTRQFVRSM). Residues 34-39 (GGGLMG) and Asp-57 each bind NAD(+). A CoA-binding site is contributed by Ser-73. Lys-75 is modified (N6-acetyllysine). Residue Lys-80 coordinates CoA. N6-succinyllysine is present on Lys-80. N6-acetyllysine; alternate is present on residues Lys-81 and Lys-87. N6-succinyllysine; alternate occurs at positions 81 and 87. Residue Glu-122 coordinates NAD(+). Lys-125 is modified (N6-acetyllysine). NAD(+) is bound at residue Lys-127. The residue at position 127 (Lys-127) is an N6-(2-hydroxyisobutyryl)lysine. Lys-136 carries the post-translational modification N6-acetyllysine; alternate. Position 136 is an N6-succinyllysine; alternate (Lys-136). NAD(+)-binding residues include Ser-149 and Asn-173. Position 149 (Ser-149) interacts with CoA. At Lys-179 the chain carries N6-acetyllysine. An N6-acetyllysine; alternate mark is found at Lys-185, Lys-192, and Lys-202. 3 positions are modified to N6-succinyllysine; alternate: Lys-185, Lys-192, and Lys-202. Lys-206 carries the N6-succinyllysine modification. Lys-212 and Lys-241 each carry N6-acetyllysine; alternate. Lys-212 and Lys-241 each carry N6-succinyllysine; alternate. Residue Lys-305 participates in NAD(+) binding. Lys-312 carries the post-translational modification N6-acetyllysine; alternate. Lys-312 is subject to N6-succinyllysine; alternate.

It belongs to the 3-hydroxyacyl-CoA dehydrogenase family. In terms of assembly, homodimer. Interacts with GLUD1; this interaction inhibits the activation of glutamate dehydrogenase 1 (GLUD1). In terms of processing, succinylation at Lys-81, adjacent to a coenzyme A binding site. Desuccinylated by SIRT5.

It localises to the mitochondrion matrix. It catalyses the reaction a (3S)-3-hydroxyacyl-CoA + NAD(+) = a 3-oxoacyl-CoA + NADH + H(+). It carries out the reaction (3S)-3-hydroxybutanoyl-CoA + NAD(+) = acetoacetyl-CoA + NADH + H(+). The enzyme catalyses (3S)-hydroxydecanoyl-CoA + NAD(+) = 3-oxodecanoyl-CoA + NADH + H(+). The catalysed reaction is (3S)-hydroxyhexadecanoyl-CoA + NAD(+) = 3-oxohexadecanoyl-CoA + NADH + H(+). Its pathway is lipid metabolism; fatty acid beta-oxidation. Its function is as follows. Mitochondrial fatty acid beta-oxidation enzyme that catalyzes the third step of the beta-oxidation cycle for medium and short-chain 3-hydroxy fatty acyl-CoAs (C4 to C10). Plays a role in the control of insulin secretion by inhibiting the activation of glutamate dehydrogenase 1 (GLUD1), an enzyme that has an important role in regulating amino acid-induced insulin secretion. Plays a role in the maintenance of normal spermatogenesis through the reduction of fatty acid accumulation in the testes. The chain is Hydroxyacyl-coenzyme A dehydrogenase, mitochondrial (Hadh) from Rattus norvegicus (Rat).